We begin with the raw amino-acid sequence, 414 residues long: MAEICCEEAMSPPATATAAVAAAVSASAAAAVSSAIDRRRRRMEMRRIRIASDLELQAGEDGRPGKRQRLARTASGAPRPDEDSASERPSCGRTEEFPRYGVTAVCGRRREMEDAVSIRPDFLPASGKFHFYGVFDGHGCSHVATTCQDRMHEIVAEEHNKGASGEVAPWRDVMEKSFARMDGEVGNRASTRSDDEPACPCEQQTPSRRDHAGSTAVVAVVSPTQVVVANAGDSRAVISRAGVPVALSVDHKPDRPDELERIEAAGGRVIYWDGARVLGVLAMSRAIGDGYLKPYVTSEPEVTVTERTDDDECLILASDGLWDVVTNEMACEVVRACFHNNGPPAPAARPSGVPSSAEAAETENGGAASVKGISKAESSDKACSDAAMLLTKLALARRSADNVSVVVVDLRRGL.

Residues T15 to D37 traverse the membrane as a helical segment. The interval L56–E95 is disordered. Positions R99–L410 constitute a PPM-type phosphatase domain. 2 residues coordinate Mn(2+): D136 and G137. Basic and acidic residues predominate over residues G186–D195. The tract at residues G186–A212 is disordered. D319 contributes to the Mn(2+) binding site. The segment at A345–G372 is disordered. Residues S355–S369 show a composition bias toward low complexity. Residue D401 coordinates Mn(2+).

Belongs to the PP2C family. The cofactor is Mg(2+). Mn(2+) is required as a cofactor.

The protein localises to the membrane. It catalyses the reaction O-phospho-L-seryl-[protein] + H2O = L-seryl-[protein] + phosphate. The enzyme catalyses O-phospho-L-threonyl-[protein] + H2O = L-threonyl-[protein] + phosphate. The chain is Probable protein phosphatase 2C 9 from Oryza sativa subsp. japonica (Rice).